Consider the following 109-residue polypeptide: MAFAGILNDADITAALAACKAEGSFDHKAFFTKVGLAAKSPADIKKVFEIIDQDKSDFVEEDELKLFLQNFSAGARALSDAETKVFLKAGDSDGDGKIGVDEFGAMIKA.

Alanine 2 bears the N-acetylalanine mark. 2 EF-hand domains span residues 39–74 (KSPADIKKVFEIIDQDKSDFVEEDELKLFLQNFSAG) and 78–109 (LSDAETKVFLKAGDSDGDGKIGVDEFGAMIKA). Ca(2+) contacts are provided by aspartate 52, aspartate 54, serine 56, phenylalanine 58, glutamate 60, glutamate 63, aspartate 91, aspartate 93, aspartate 95, lysine 97, and glutamate 102.

Belongs to the parvalbumin family. Monomer.

Its function is as follows. In muscle, parvalbumin is thought to be involved in relaxation after contraction. It binds two calcium ions. The polypeptide is Parvalbumin beta 2 (Gadus morhua (Atlantic cod)).